A 59-amino-acid chain; its full sequence is Large ribosomal subunit protein bL32c (59 aa).

This sequence belongs to the bacterial ribosomal protein bL32 family.

It is found in the plastid. The protein resides in the chloroplast. The sequence is that of Large ribosomal subunit protein bL32c from Physcomitrium patens (Spreading-leaved earth moss).